Reading from the N-terminus, the 464-residue chain is Cytoplasmic tRNA 2-thiolation protein 2 (464 aa).

Belongs to the CTU2/NCS2 family.

The protein resides in the cytoplasm. It functions in the pathway tRNA modification; 5-methoxycarbonylmethyl-2-thiouridine-tRNA biosynthesis. Plays a central role in 2-thiolation of mcm(5)S(2)U at tRNA wobble positions of tRNA(Lys), tRNA(Glu) and tRNA(Gln). May act by forming a heterodimer with NCS6/CTU1 that ligates sulfur from thiocarboxylated URM1 onto the uridine of tRNAs at wobble position. This is Cytoplasmic tRNA 2-thiolation protein 2 from Oryza sativa subsp. indica (Rice).